The chain runs to 144 residues: Transcriptional regulator MraZ (144 aa).

SpoVT-AbrB domains follow at residues 5–50 (TFNH…ALPQ) and 81–124 (AHEV…DRAA).

It belongs to the MraZ family. As to quaternary structure, forms oligomers.

It is found in the cytoplasm. The protein localises to the nucleoid. This Anaeromyxobacter dehalogenans (strain 2CP-C) protein is Transcriptional regulator MraZ.